Reading from the N-terminus, the 750-residue chain is Photosystem I P700 chlorophyll a apoprotein A1 (750 aa).

8 helical membrane-spanning segments follow: residues 70 to 93 (VFSAHFGQLSIIFLWLSGMYFHGA), 156 to 179 (LYCTGIGALVCAALMLFAGWFHYH), 195 to 219 (LNHHLAGLLGLGSLSWAGHQVHVSL), 291 to 309 (IAHHHLAIAILFLIAGHMY), 346 to 369 (WHAQLSLNLAMLGSLTIIVAHHMY), 385 to 411 (LSLFTHHMWIGGFLIVGAAAHAAIFMV), 433 to 455 (AIISHLNWVCIFLGFHSFGLYIH), and 531 to 549 (FLVHHIHAFTIHVPVLILL). Residues Cys573 and Cys582 each contribute to the [4Fe-4S] cluster site. Transmembrane regions (helical) follow at residues 589-610 (HVFLGLFWMYNAISVVIFHFSW) and 664-686 (LSAYGLFFLGAHFVWAFSLMFLF). Residue His675 participates in chlorophyll a' binding. Met683 and Tyr691 together coordinate chlorophyll a. Phylloquinone is bound at residue Trp692. The chain crosses the membrane as a helical span at residues 724–744 (AVGVTHYLLGGIATTWAFFLA).

This sequence belongs to the PsaA/PsaB family. In terms of assembly, the PsaA/B heterodimer binds the P700 chlorophyll special pair and subsequent electron acceptors. PSI consists of a core antenna complex that captures photons, and an electron transfer chain that converts photonic excitation into a charge separation. The eukaryotic PSI reaction center is composed of at least 11 subunits. P700 is a chlorophyll a/chlorophyll a' dimer, A0 is one or more chlorophyll a, A1 is one or both phylloquinones and FX is a shared 4Fe-4S iron-sulfur center. serves as cofactor.

Its subcellular location is the plastid. The protein localises to the chloroplast thylakoid membrane. The enzyme catalyses reduced [plastocyanin] + hnu + oxidized [2Fe-2S]-[ferredoxin] = oxidized [plastocyanin] + reduced [2Fe-2S]-[ferredoxin]. Its function is as follows. PsaA and PsaB bind P700, the primary electron donor of photosystem I (PSI), as well as the electron acceptors A0, A1 and FX. PSI is a plastocyanin-ferredoxin oxidoreductase, converting photonic excitation into a charge separation, which transfers an electron from the donor P700 chlorophyll pair to the spectroscopically characterized acceptors A0, A1, FX, FA and FB in turn. Oxidized P700 is reduced on the lumenal side of the thylakoid membrane by plastocyanin. This Crucihimalaya wallichii (Rock-cress) protein is Photosystem I P700 chlorophyll a apoprotein A1.